We begin with the raw amino-acid sequence, 1464 residues long: DNA polymerase III PolC-type (1464 aa).

One can recognise an Exonuclease domain in the interval 426–582 (YVVFDVETTG…YDAEATGRLL (157 aa)).

This sequence belongs to the DNA polymerase type-C family. PolC subfamily.

Its subcellular location is the cytoplasm. The enzyme catalyses DNA(n) + a 2'-deoxyribonucleoside 5'-triphosphate = DNA(n+1) + diphosphate. In terms of biological role, required for replicative DNA synthesis. This DNA polymerase also exhibits 3' to 5' exonuclease activity. This chain is DNA polymerase III PolC-type, found in Streptococcus thermophilus (strain ATCC BAA-250 / LMG 18311).